The following is a 296-amino-acid chain: Protoheme IX farnesyltransferase (296 aa).

Helical transmembrane passes span 8–28, 35–55, 84–104, 107–127, 132–152, 162–182, 215–235, and 264–284; these read VTKP…FFLA, WILM…GCAI, AAFF…SYFT, VAVA…TMYF, VYGT…GYCA, AILL…IAIF, FAVV…FMVV, and VFFF…LDFN.

It belongs to the UbiA prenyltransferase family. Protoheme IX farnesyltransferase subfamily.

The protein resides in the cell inner membrane. It carries out the reaction heme b + (2E,6E)-farnesyl diphosphate + H2O = Fe(II)-heme o + diphosphate. It participates in porphyrin-containing compound metabolism; heme O biosynthesis; heme O from protoheme: step 1/1. Its function is as follows. Converts heme B (protoheme IX) to heme O by substitution of the vinyl group on carbon 2 of heme B porphyrin ring with a hydroxyethyl farnesyl side group. This is Protoheme IX farnesyltransferase from Marinomonas sp. (strain MWYL1).